A 332-amino-acid chain; its full sequence is Ketol-acid reductoisomerase (NADP(+)) (332 aa).

The KARI N-terminal Rossmann domain maps to 1-182 (MATIYYEKDA…GCTRAGVLAT (182 aa)). NADP(+) is bound by residues 25–28 (YGSQ), R48, S53, and 83–86 (DELQ). H108 is a catalytic residue. Residue G134 coordinates NADP(+). One can recognise a KARI C-terminal knotted domain in the interval 183 to 328 (TFKEETETDL…KELRSMMPWL (146 aa)). 4 residues coordinate Mg(2+): D191, E195, E227, and E231. S252 serves as a coordination point for substrate.

Belongs to the ketol-acid reductoisomerase family. Requires Mg(2+) as cofactor.

The enzyme catalyses (2R)-2,3-dihydroxy-3-methylbutanoate + NADP(+) = (2S)-2-acetolactate + NADPH + H(+). It carries out the reaction (2R,3R)-2,3-dihydroxy-3-methylpentanoate + NADP(+) = (S)-2-ethyl-2-hydroxy-3-oxobutanoate + NADPH + H(+). Its pathway is amino-acid biosynthesis; L-isoleucine biosynthesis; L-isoleucine from 2-oxobutanoate: step 2/4. It participates in amino-acid biosynthesis; L-valine biosynthesis; L-valine from pyruvate: step 2/4. Its function is as follows. Involved in the biosynthesis of branched-chain amino acids (BCAA). Catalyzes an alkyl-migration followed by a ketol-acid reduction of (S)-2-acetolactate (S2AL) to yield (R)-2,3-dihydroxy-isovalerate. In the isomerase reaction, S2AL is rearranged via a Mg-dependent methyl migration to produce 3-hydroxy-3-methyl-2-ketobutyrate (HMKB). In the reductase reaction, this 2-ketoacid undergoes a metal-dependent reduction by NADPH to yield (R)-2,3-dihydroxy-isovalerate. The polypeptide is Ketol-acid reductoisomerase (NADP(+)) (Methanocella arvoryzae (strain DSM 22066 / NBRC 105507 / MRE50)).